The sequence spans 471 residues: Sestrin-2 (471 aa).

Position 1 is an N-acetylmethionine (M1). Positions 57–230 (GLEALMSSGR…APSPPSEQST (174 aa)) are N-terminal domain; mediates the alkylhydroperoxide reductase activity. C116 functions as the Cysteine sulfenic acid (-SOH) intermediate in the catalytic mechanism. K166 is covalently cross-linked (Glycyl lysine isopeptide (Lys-Gly) (interchain with G-Cter in ubiquitin)). Residues 212-241 (DPEGSPAPQAPSPPSEQSTPPSRDSLNHSG) form a disordered region. S240 is modified (phosphoserine). Positions 299–471 (ANPDMLCFVE…ALRAITRYMT (173 aa)) are C-terminal domain; mediates TORC1 regulation. L-leucine-binding positions include 365-368 (TYNT), T377, and E442.

It belongs to the sestrin family. As to quaternary structure, interacts with the GATOR2 complex which is composed of MIOS, SEC13, SEH1L, WDR24 and WDR59; the interaction is negatively regulated by leucine. Conveys leucine availability via direct interaction with SEH1L and WDR24 components of the GATOR2 complex. Interacts with RRAGA, RRAGB, RRAGC and RRAGD; may function as a guanine nucleotide dissociation inhibitor for RRAGs and regulate them. May interact with the TORC2 complex. Interacts with KEAP1, RBX1, SQSTM and ULK1; to regulate the degradation of KEAP1. May also associate with the complex composed of TSC1, TSC2 and the AMP-responsive protein kinase/AMPK to regulate TORC1 signaling. May interact with PRDX1. Post-translationally, phosphorylated by ULK1 at multiple sites. Ubiquitinated at Lys-166 by RNF167 via 'Lys-63'-linked polyubiquitination in response to leucine deprivation: ubiquitination promotes SESN2-interaction with the GATOR2 complex, leading to inhibit the TORC1 signaling pathway. Deubiquitinated at Lys-166 by STAMBPL1, promoting the TORC1 signaling pathway. Ubiquitinated by RNF186; ubiquitination mediates proteasomal degradation.

The protein resides in the cytoplasm. It catalyses the reaction a hydroperoxide + L-cysteinyl-[protein] = S-hydroxy-L-cysteinyl-[protein] + an alcohol. Its function is as follows. Functions as an intracellular leucine sensor that negatively regulates the mTORC1 signaling pathway through the GATOR complex. In absence of leucine, binds the GATOR subcomplex GATOR2 and prevents mTORC1 signaling. Binding of leucine to SESN2 disrupts its interaction with GATOR2 thereby activating the TORC1 signaling pathway. This stress-inducible metabolic regulator also plays a role in protection against oxidative and genotoxic stresses. May negatively regulate protein translation in response to endoplasmic reticulum stress, via mTORC1. May positively regulate the transcription by NFE2L2 of genes involved in the response to oxidative stress by facilitating the SQSTM1-mediated autophagic degradation of KEAP1. May also mediate TP53 inhibition of TORC1 signaling upon genotoxic stress. Moreover, may prevent the accumulation of reactive oxygen species (ROS) through the alkylhydroperoxide reductase activity born by the N-terminal domain of the protein. Was originally reported to contribute to oxidative stress resistance by reducing PRDX1. However, this could not be confirmed. The sequence is that of Sestrin-2 from Bos taurus (Bovine).